The following is a 426-amino-acid chain: Serine--tRNA ligase (426 aa).

233–235 (TSE) lines the L-serine pocket. 264–266 (RSE) serves as a coordination point for ATP. E287 contacts L-serine. 351-354 (EISS) serves as a coordination point for ATP. S387 contacts L-serine.

It belongs to the class-II aminoacyl-tRNA synthetase family. Type-1 seryl-tRNA synthetase subfamily. Homodimer. The tRNA molecule binds across the dimer.

It is found in the cytoplasm. The catalysed reaction is tRNA(Ser) + L-serine + ATP = L-seryl-tRNA(Ser) + AMP + diphosphate + H(+). It catalyses the reaction tRNA(Sec) + L-serine + ATP = L-seryl-tRNA(Sec) + AMP + diphosphate + H(+). Its pathway is aminoacyl-tRNA biosynthesis; selenocysteinyl-tRNA(Sec) biosynthesis; L-seryl-tRNA(Sec) from L-serine and tRNA(Sec): step 1/1. Functionally, catalyzes the attachment of serine to tRNA(Ser). Is also able to aminoacylate tRNA(Sec) with serine, to form the misacylated tRNA L-seryl-tRNA(Sec), which will be further converted into selenocysteinyl-tRNA(Sec). The sequence is that of Serine--tRNA ligase from Xylella fastidiosa (strain 9a5c).